The sequence spans 900 residues: Bifunctional uridylyltransferase/uridylyl-removing enzyme (900 aa).

A uridylyltransferase region spans residues 1 to 342 (MPQVDPELFD…PCEQPVQIQP (342 aa)). Residues 343–705 (LNSRFQLRDG…TTQREFESGS (363 aa)) are uridylyl-removing. The region spanning 461–583 (VDAHTLNLIK…VGDQTHLDYL (123 aa)) is the HD domain. 2 consecutive ACT domains span residues 706–789 (QIFI…IIQR) and 816–891 (VLEV…DNGR).

The protein belongs to the GlnD family. Mg(2+) is required as a cofactor.

The catalysed reaction is [protein-PII]-L-tyrosine + UTP = [protein-PII]-uridylyl-L-tyrosine + diphosphate. It carries out the reaction [protein-PII]-uridylyl-L-tyrosine + H2O = [protein-PII]-L-tyrosine + UMP + H(+). With respect to regulation, uridylyltransferase (UTase) activity is inhibited by glutamine, while glutamine activates uridylyl-removing (UR) activity. Functionally, modifies, by uridylylation and deuridylylation, the PII regulatory proteins (GlnB and homologs), in response to the nitrogen status of the cell that GlnD senses through the glutamine level. Under low glutamine levels, catalyzes the conversion of the PII proteins and UTP to PII-UMP and PPi, while under higher glutamine levels, GlnD hydrolyzes PII-UMP to PII and UMP (deuridylylation). Thus, controls uridylylation state and activity of the PII proteins, and plays an important role in the regulation of nitrogen assimilation and metabolism. The polypeptide is Bifunctional uridylyltransferase/uridylyl-removing enzyme (Pseudomonas aeruginosa (strain ATCC 15692 / DSM 22644 / CIP 104116 / JCM 14847 / LMG 12228 / 1C / PRS 101 / PAO1)).